A 489-amino-acid polypeptide reads, in one-letter code: Bifunctional protein HldE (489 aa).

The tract at residues 1–330 (MFDFDGLSNA…RKILPPAFLA (330 aa)) is ribokinase. Residue 205 to 208 (NRKE) coordinates ATP. Aspartate 275 is an active-site residue. Positions 358-489 (FTNGCFDILH…SLVKRAGGRA (132 aa)) are cytidylyltransferase.

This sequence in the N-terminal section; belongs to the carbohydrate kinase PfkB family. The protein in the C-terminal section; belongs to the cytidylyltransferase family. As to quaternary structure, homodimer.

The enzyme catalyses D-glycero-beta-D-manno-heptose 7-phosphate + ATP = D-glycero-beta-D-manno-heptose 1,7-bisphosphate + ADP + H(+). It catalyses the reaction D-glycero-beta-D-manno-heptose 1-phosphate + ATP + H(+) = ADP-D-glycero-beta-D-manno-heptose + diphosphate. Its pathway is nucleotide-sugar biosynthesis; ADP-L-glycero-beta-D-manno-heptose biosynthesis; ADP-L-glycero-beta-D-manno-heptose from D-glycero-beta-D-manno-heptose 7-phosphate: step 1/4. It participates in nucleotide-sugar biosynthesis; ADP-L-glycero-beta-D-manno-heptose biosynthesis; ADP-L-glycero-beta-D-manno-heptose from D-glycero-beta-D-manno-heptose 7-phosphate: step 3/4. Catalyzes the phosphorylation of D-glycero-D-manno-heptose 7-phosphate at the C-1 position to selectively form D-glycero-beta-D-manno-heptose-1,7-bisphosphate. Functionally, catalyzes the ADP transfer from ATP to D-glycero-beta-D-manno-heptose 1-phosphate, yielding ADP-D-glycero-beta-D-manno-heptose. The protein is Bifunctional protein HldE of Nitrobacter hamburgensis (strain DSM 10229 / NCIMB 13809 / X14).